A 108-amino-acid chain; its full sequence is Cytochrome c oxidase subunit 1 (108 aa).

Residues 10-30 traverse the membrane as a helical segment; that stretch reads AFVAPVLGLLGFIPGGAGGIV. Position 49 (His49) interacts with heme a3. Helical transmembrane passes span 50-70 and 85-105; these read FHLQ…YWLL and LGLA…VGLH. A Fe(II)-heme a-binding site is contributed by His51.

Belongs to the heme-copper respiratory oxidase family. Requires heme as cofactor. Cu cation is required as a cofactor.

It localises to the cell membrane. It carries out the reaction 4 Fe(II)-[cytochrome c] + O2 + 8 H(+)(in) = 4 Fe(III)-[cytochrome c] + 2 H2O + 4 H(+)(out). It functions in the pathway energy metabolism; oxidative phosphorylation. In Thermus thermophilus, this protein is Cytochrome c oxidase subunit 1 (cbaA).